A 519-amino-acid chain; its full sequence is uncharacterized protein (519 aa).

4 consecutive transmembrane segments (helical) span residues 141–161, 202–222, 385–405, and 433–453; these read GSSL…ANVF, LGET…WALA, FVVR…PFVG, and TVVP…AELV.

The protein localises to the cell membrane. This is an uncharacterized protein from Sinorhizobium fredii (strain NBRC 101917 / NGR234).